A 562-amino-acid polypeptide reads, in one-letter code: DNA ligase (562 aa).

Glutamate 250 lines the ATP pocket. Lysine 252 (N6-AMP-lysine intermediate) is an active-site residue. 6 residues coordinate ATP: arginine 257, arginine 272, glutamate 302, phenylalanine 342, arginine 417, and lysine 423.

This sequence belongs to the ATP-dependent DNA ligase family. Mg(2+) serves as cofactor. It depends on Zn(2+) as a cofactor.

It carries out the reaction ATP + (deoxyribonucleotide)n-3'-hydroxyl + 5'-phospho-(deoxyribonucleotide)m = (deoxyribonucleotide)n+m + AMP + diphosphate.. The catalysed reaction is NAD(+) + (deoxyribonucleotide)n-3'-hydroxyl + 5'-phospho-(deoxyribonucleotide)m = (deoxyribonucleotide)n+m + AMP + beta-nicotinamide D-nucleotide.. Functionally, DNA ligase that seals nicks in double-stranded DNA during DNA replication, DNA recombination and DNA repair. Can use both ATP and NAD(+), but NAD(+) may be a preferred nucleotide cofactor. In Thermococcus onnurineus (strain NA1), this protein is DNA ligase.